The chain runs to 377 residues: 3-dehydroquinate synthase (377 aa).

NAD(+)-binding positions include Gly115–Asp119, Thr139–Ser140, Lys152, and Lys161. Zn(2+) is bound by residues Glu194, His256, and His275.

The protein belongs to the sugar phosphate cyclases superfamily. Dehydroquinate synthase family. The cofactor is Co(2+). Zn(2+) serves as cofactor. NAD(+) is required as a cofactor.

Its subcellular location is the cytoplasm. It carries out the reaction 7-phospho-2-dehydro-3-deoxy-D-arabino-heptonate = 3-dehydroquinate + phosphate. Its pathway is metabolic intermediate biosynthesis; chorismate biosynthesis; chorismate from D-erythrose 4-phosphate and phosphoenolpyruvate: step 2/7. Catalyzes the conversion of 3-deoxy-D-arabino-heptulosonate 7-phosphate (DAHP) to dehydroquinate (DHQ). This chain is 3-dehydroquinate synthase, found in Rhizobium rhizogenes (strain K84 / ATCC BAA-868) (Agrobacterium radiobacter).